The following is a 598-amino-acid chain: Arginine--tRNA ligase (598 aa).

The 'HIGH' region motif lies at 135-145 (ANPTGPIHIGG). The interval 229–248 (VDGGTDEKGEPLGEGDSEQR) is disordered. Over residues 231-248 (GGTDEKGEPLGEGDSEQR) the composition is skewed to basic and acidic residues.

This sequence belongs to the class-I aminoacyl-tRNA synthetase family. In terms of assembly, monomer.

It is found in the cytoplasm. It catalyses the reaction tRNA(Arg) + L-arginine + ATP = L-arginyl-tRNA(Arg) + AMP + diphosphate. This Bifidobacterium animalis subsp. lactis (strain AD011) protein is Arginine--tRNA ligase.